The following is a 444-amino-acid chain: Phosphoglucosamine mutase (444 aa).

Catalysis depends on S102, which acts as the Phosphoserine intermediate. Positions 102, 241, 243, and 245 each coordinate Mg(2+). S102 bears the Phosphoserine mark.

Belongs to the phosphohexose mutase family. Mg(2+) serves as cofactor. In terms of processing, activated by phosphorylation.

The catalysed reaction is alpha-D-glucosamine 1-phosphate = D-glucosamine 6-phosphate. In terms of biological role, catalyzes the conversion of glucosamine-6-phosphate to glucosamine-1-phosphate. The protein is Phosphoglucosamine mutase of Buchnera aphidicola subsp. Acyrthosiphon pisum (strain 5A).